The chain runs to 432 residues: Maltoporin (432 aa).

A signal peptide spans 1-22 (MKKVSVIAAAVAATLAAGSAFA).

It belongs to the porin LamB (TC 1.B.3) family. Homotrimer formed of three 18-stranded antiparallel beta-barrels, containing three independent channels.

The protein localises to the cell outer membrane. It carries out the reaction beta-maltose(in) = beta-maltose(out). In terms of biological role, involved in the transport of maltose and maltodextrins. The chain is Maltoporin from Vibrio parahaemolyticus serotype O3:K6 (strain RIMD 2210633).